The following is a 376-amino-acid chain: GDSL esterase/lipase At5g55050 (376 aa).

The first 29 residues, 1 to 29 (MPTNNTPFLTIFLLFLGLLRFDSFPGLEA), serve as a signal peptide directing secretion. Ser-46 acts as the Nucleophile in catalysis. Asn-134 and Asn-245 each carry an N-linked (GlcNAc...) asparagine glycan. Catalysis depends on residues Asp-340 and His-344.

Belongs to the 'GDSL' lipolytic enzyme family.

It localises to the secreted. The protein is GDSL esterase/lipase At5g55050 of Arabidopsis thaliana (Mouse-ear cress).